Consider the following 845-residue polypeptide: Protein arginine N-methyltransferase 9 (845 aa).

TPR repeat units lie at residues 25 to 58, 67 to 100, and 101 to 134; these read VSRS…APEL, QYTL…FPDD, and EVIC…NPDF. SAM-dependent MTase PRMT-type domains follow at residues 137–466 and 530–845; these read AKEN…YLRI and NIPY…TVKQ.

Belongs to the class I-like SAM-binding methyltransferase superfamily. Protein arginine N-methyltransferase family. In terms of assembly, found in a complex with PRMT9, SF3B2 and SF3B4. Interacts with SF3B2.

It is found in the cytoplasm. The enzyme catalyses L-arginyl-[protein] + 2 S-adenosyl-L-methionine = N(omega),N(omega)'-dimethyl-L-arginyl-[protein] + 2 S-adenosyl-L-homocysteine + 2 H(+). In terms of biological role, arginine methyltransferase that can both catalyze the formation of omega-N monomethylarginine (MMA) and symmetrical dimethylarginine (sDMA). Specifically mediates the symmetrical dimethylation of SF3B2. Involved in the regulation of alternative splicing of pre-mRNA. This is Protein arginine N-methyltransferase 9 from Homo sapiens (Human).